Consider the following 209-residue polypeptide: Leucyl/phenylalanyl-tRNA--protein transferase (209 aa).

It belongs to the L/F-transferase family.

It is found in the cytoplasm. The enzyme catalyses N-terminal L-lysyl-[protein] + L-leucyl-tRNA(Leu) = N-terminal L-leucyl-L-lysyl-[protein] + tRNA(Leu) + H(+). It catalyses the reaction N-terminal L-arginyl-[protein] + L-leucyl-tRNA(Leu) = N-terminal L-leucyl-L-arginyl-[protein] + tRNA(Leu) + H(+). It carries out the reaction L-phenylalanyl-tRNA(Phe) + an N-terminal L-alpha-aminoacyl-[protein] = an N-terminal L-phenylalanyl-L-alpha-aminoacyl-[protein] + tRNA(Phe). Functionally, functions in the N-end rule pathway of protein degradation where it conjugates Leu, Phe and, less efficiently, Met from aminoacyl-tRNAs to the N-termini of proteins containing an N-terminal arginine or lysine. This Paramagnetospirillum magneticum (strain ATCC 700264 / AMB-1) (Magnetospirillum magneticum) protein is Leucyl/phenylalanyl-tRNA--protein transferase.